We begin with the raw amino-acid sequence, 294 residues long: Survival motor neuron protein (294 aa).

Gly residues predominate over residues M1–V12. The segment at M1 to D32 is disordered. Position 2 is an N-acetylalanine (A2). Residues S4, S5, and S8 each carry the phosphoserine; by PKA modification. The tract at residues P13 to D44 is P1 (binding site for GEMIN2). Position 25 is a phosphothreonine (T25). A phosphoserine mark is found at S28 and S31. K51 participates in a covalent cross-link: Glycyl lysine isopeptide (Lys-Gly) (interchain with G-Cter in SUMO2). The segment at D58–P88 is disordered. The segment covering T68–K82 has biased composition (basic residues). T69 bears the Phosphothreonine mark. Position 85 is a phosphothreonine; by PKA (T85). A Tudor domain is found at Q91–N151. The tract at residues K97–K209 is required for interaction with RPP20/POP7. Low complexity predominate over residues A156 to S166. A disordered region spans residues A156–P222. Position 187 is a phosphoserine; by PKA (S187). The segment covering L194 to R204 has biased composition (pro residues). K209 participates in a covalent cross-link: Glycyl lysine isopeptide (Lys-Gly) (interchain with G-Cter in SUMO2). The P2 (binding site for SM B) stretch occupies residues P240 to W267. The interval G279–N294 is required for interaction with SYNCRIP.

It belongs to the SMN family. In terms of assembly, homooligomer; may form higher order homooligomers in the dimer to octamer range. Part of the core SMN complex that contains SMN1, GEMIN2/SIP1, DDX20/GEMIN3, GEMIN4, GEMIN5, GEMIN6, GEMIN7, GEMIN8 and STRAP/UNRIP. Part of the SMN-Sm complex that contains SMN1, GEMIN2/SIP1, DDX20/GEMIN3, GEMIN4, GEMIN5, GEMIN6, GEMIN7, GEMIN8, STRAP/UNRIP and the Sm proteins SNRPB, SNRPD1, SNRPD2, SNRPD3, SNRPE, SNRPF and SNRPG. Component of an import snRNP complex composed of KPNB1, RNUT1, SMN1 and ZNF259. Interacts with DDX20, FBL, NOLA1, RNUT1, SYNCRIP and with several spliceosomal snRNP core Sm proteins, including SNRPB, SNRPD1, SNRPD2, SNRPD3, SNRPE and ILF3. Interacts with GEMIN2; the interaction is direct. Interacts with GEMIN3; the interaction is direct. Interacts with GEMIN8; the interaction is direct. Interacts with SNRPB; the interaction is direct. Interacts (via Tudor domain) with SNRPD1 (via C-terminus); the interaction is direct. Interacts with SNRPD2; the interaction is direct. Interacts (via Tudor domain) with SNRPD3 (via C-terminus); the interaction is direct. Interacts with SNRPE; the interaction is direct. Interacts with OSTF1, LSM10, LSM11 and RPP20/POP7. Interacts (via C-terminal region) with ZPR1 (via C-terminal region). Interacts (via Tudor domain) with COIL. Interacts with SETX; recruits SETX to POLR2A. Interacts with POLR2A (via the C-terminal domain (CTD)). Interacts with PRMT5. Interacts with XRN2. Interacts (via C-terminus) with FMR1 (via C-terminus); the interaction is direct and occurs in a RNA-independent manner. Interacts (via Tudor domain) with SF3B2 ('Arg-508'-methylated form). Interacts with WRAP53/TCAB1. Interacts (via Tudor domain) with ELAVL4 in an RNA-independent manner; the interaction is required for localization of ELAVL4 to RNA granules. Interacts with FRG1.

Its subcellular location is the nucleus. It is found in the gem. The protein resides in the cajal body. It localises to the cytoplasm. The protein localises to the cytoplasmic granule. Its subcellular location is the perikaryon. It is found in the cell projection. The protein resides in the neuron projection. It localises to the axon. The protein localises to the myofibril. Its subcellular location is the sarcomere. It is found in the z line. In terms of biological role, the SMN complex catalyzes the assembly of small nuclear ribonucleoproteins (snRNPs), the building blocks of the spliceosome, and thereby plays an important role in the splicing of cellular pre-mRNAs. Most spliceosomal snRNPs contain a common set of Sm proteins SNRPB, SNRPD1, SNRPD2, SNRPD3, SNRPE, SNRPF and SNRPG that assemble in a heptameric protein ring on the Sm site of the small nuclear RNA to form the core snRNP (Sm core). In the cytosol, the Sm proteins SNRPD1, SNRPD2, SNRPE, SNRPF and SNRPG are trapped in an inactive 6S pICln-Sm complex by the chaperone CLNS1A that controls the assembly of the core snRNP. To assemble core snRNPs, the SMN complex accepts the trapped 5Sm proteins from CLNS1A forming an intermediate. Binding of snRNA inside 5Sm ultimately triggers eviction of the SMN complex, thereby allowing binding of SNRPD3 and SNRPB to complete assembly of the core snRNP. Within the SMN complex, SMN1 acts as a structural backbone and together with GEMIN2 it gathers the Sm complex subunits. Ensures the correct splicing of U12 intron-containing genes that may be important for normal motor and proprioceptive neurons development. Also required for resolving RNA-DNA hybrids created by RNA polymerase II, that form R-loop in transcription terminal regions, an important step in proper transcription termination. May also play a role in the metabolism of small nucleolar ribonucleoprotein (snoRNPs). This is Survival motor neuron protein (SMN1) from Macaca fascicularis (Crab-eating macaque).